The chain runs to 347 residues: Involucrin (347 aa).

Disordered regions lie at residues 1-43 (MSQQ…LPAP) and 56-347 (PLED…RRSL). The span at 27 to 36 (ADTQQEQVKQ) shows a compositional bias: polar residues. Composition is skewed to low complexity over residues 70–114 (VPEQ…QQES) and 138–161 (DQQQ…QQES). Composition is skewed to basic and acidic residues over residues 164–173 (QELHVDHHQQ) and 212–221 (QELHVDHHQQ). 2 stretches are compositionally biased toward low complexity: residues 222–241 (QQES…QQES) and 265–285 (DQQQ…QQQE). Over residues 287–341 (QEDHQKAEHLEQEEAQREQQLKGQLEQEKKGVYQHLDQELTKRDEHLEKKGEHCW) the composition is skewed to basic and acidic residues.

It belongs to the involucrin family. In terms of assembly, directly or indirectly cross-linked to cornifelin (CNFN). Post-translationally, substrate of transglutaminase. Specific glutamines or lysines are cross-linked to keratins, desmoplakin and to inter involucrin molecules. In terms of tissue distribution, keratinocytes of epidermis and other stratified squamous epithelia.

The protein resides in the cytoplasm. In terms of biological role, part of the insoluble cornified cell envelope (CE) of stratified squamous epithelia. The sequence is that of Involucrin (IVL) from Sus scrofa (Pig).